A 274-amino-acid polypeptide reads, in one-letter code: Proliferating cell nuclear antigen 1 (274 aa).

A DNA-binding region spans residues 61 to 80 (RCDRERVLGVNIASLNKVFK).

It belongs to the PCNA family. Homotrimer. Interacts with ORC1 (via PIP-box motif); the interaction occurs during DNA replication in trophozoites. Interacts with ORC5; the interaction occurs during the trophozoite stage but not at the late schizont stage. Interacts with FEN1.

Its subcellular location is the nucleus. It localises to the chromosome. It is found in the cytoplasm. In terms of biological role, auxiliary protein of DNA polymerase delta and is involved in the control of DNA replication by increasing the polymerase processibility during elongation of the leading strand. Involved in DNA damage response. The protein is Proliferating cell nuclear antigen 1 of Plasmodium falciparum (isolate 3D7).